Reading from the N-terminus, the 208-residue chain is MSSSRIEELPDDDVPKTTVEDAADSSESEVEGAEEPTIPGGAAVTVHSRNEKKARKAIGKLGLKHVPGITRVTLRRPKGILFVINQPDVYRSPSSNTWIIFGEAKIEDLNSQAQASAAQQLAAAEAAGSNEHAGHDHASHDHGKGKAVESADKKDEEEDDEEVFDASGLEAKDIELVMAQASVSRNKAIKALKENDNDIVNSIMALSV.

Basic and acidic residues predominate over residues 1-19 (MSSSRIEELPDDDVPKTTV). Disordered stretches follow at residues 1–50 (MSSS…HSRN) and 120–166 (QLAA…VFDA). A compositionally biased stretch (acidic residues) spans 21–34 (DAADSSESEVEGAE). One can recognise an NAC-A/B domain in the interval 48–113 (SRNEKKARKA…AKIEDLNSQA (66 aa)). A compositionally biased stretch (low complexity) spans 120–131 (QLAAAEAAGSNE). Positions 132 to 154 (HAGHDHASHDHGKGKAVESADKK) are enriched in basic and acidic residues. Acidic residues predominate over residues 155-164 (DEEEDDEEVF). One can recognise a UBA domain in the interval 169 to 208 (LEAKDIELVMAQASVSRNKAIKALKENDNDIVNSIMALSV).

This sequence belongs to the NAC-alpha family. Part of the nascent polypeptide-associated complex (NAC), consisting of EGD2 and EGD1. NAC associates with ribosomes via EGD1.

The protein localises to the cytoplasm. It localises to the nucleus. Component of the nascent polypeptide-associated complex (NAC), a dynamic component of the ribosomal exit tunnel, protecting the emerging polypeptides from interaction with other cytoplasmic proteins to ensure appropriate nascent protein targeting. The NAC complex also promotes mitochondrial protein import by enhancing productive ribosome interactions with the outer mitochondrial membrane and blocks the inappropriate interaction of ribosomes translating non-secretory nascent polypeptides with translocation sites in the membrane of the endoplasmic reticulum. EGD2 may also be involved in transcription regulation. The chain is Nascent polypeptide-associated complex subunit alpha (EGD2) from Ajellomyces capsulatus (strain NAm1 / WU24) (Darling's disease fungus).